Reading from the N-terminus, the 640-residue chain is RNA polymerase II elongation factor ELL2 (640 aa).

Disordered stretches follow at residues 172–202, 290–320, and 343–490; these read AVSD…STIS, KLNP…PQKR, and RVPP…EEDL. Polar residues-rich tracts occupy residues 184–202 and 291–318; these read TPMN…STIS and LNPS…SSPQ. A compositionally biased stretch (low complexity) spans 360–372; the sequence is AAGLPLPPAAAAI. A compositionally biased stretch (polar residues) spans 391–401; that stretch reads IVNSNSNSPST. The segment covering 457–470 has biased composition (basic residues); that stretch reads MSHKKSKKKSKKHK. Basic and acidic residues predominate over residues 471–490; it reads EKDQIKKHDIETIEEKEEDL. Residues serine 503 and serine 580 each carry the phosphoserine modification. The OCEL domain maps to 526–636; the sequence is PDYLIKYIAI…LIGEFDQQQA (111 aa).

It belongs to the ELL/occludin family. Component of the super elongation complex (SEC), at least composed of EAF1, EAF2, CDK9, MLLT3/AF9, AFF (AFF1 or AFF4), the P-TEFb complex and ELL (ELL, ELL2 or ELL3). Component of the little elongation complex (LEC), at least composed of ELL (ELL, ELL2 or ELL3), ZC3H8, ICE1 and ICE2. Interacts with AFF4; the interaction is direct and leads to stabilize ELL2 and prevent ELL2 ubiquitination. Interacts with EAF1 and EAF2. Post-translationally, ubiquitinated by SIAH1, leading to its degradation by the proteasome. Interaction with AFF4 stabilizes ELL2 and prevents ELL2 ubiquitination.

Its subcellular location is the nucleus. In terms of biological role, elongation factor component of the super elongation complex (SEC), a complex required to increase the catalytic rate of RNA polymerase II transcription by suppressing transient pausing by the polymerase at multiple sites along the DNA. Component of the little elongation complex (LEC), a complex required to regulate small nuclear RNA (snRNA) gene transcription by RNA polymerase II and III. Plays a role in immunoglobulin secretion in plasma cells: directs efficient alternative mRNA processing, influencing both proximal poly(A) site choice and exon skipping, as well as immunoglobulin heavy chain (IgH) alternative processing. Probably acts by regulating histone modifications accompanying transition from membrane-specific to secretory IgH mRNA expression. The sequence is that of RNA polymerase II elongation factor ELL2 (ELL2) from Homo sapiens (Human).